The sequence spans 168 residues: Small ribosomal subunit protein uS4 (168 aa).

One can recognise an S4 RNA-binding domain in the interval 103 to 167 (RRLQTIVYKK…SPFKKSIEEK (65 aa)).

The protein belongs to the universal ribosomal protein uS4 family. As to quaternary structure, part of the 30S ribosomal subunit. Contacts protein S5. The interaction surface between S4 and S5 is involved in control of translational fidelity.

In terms of biological role, one of the primary rRNA binding proteins, it binds directly to 16S rRNA where it nucleates assembly of the body of the 30S subunit. Functionally, with S5 and S12 plays an important role in translational accuracy. This chain is Small ribosomal subunit protein uS4, found in Staphylothermus marinus (strain ATCC 43588 / DSM 3639 / JCM 9404 / F1).